A 355-amino-acid polypeptide reads, in one-letter code: Tabersonine 16-O-methyltransferase (355 aa).

Residues 198–201 (IGGG), aspartate 222, 222–223 (DL), 242–243 (DM), and lysine 256 contribute to the S-adenosyl-L-methionine site. Catalysis depends on histidine 260, which acts as the Proton acceptor.

The protein belongs to the class I-like SAM-binding methyltransferase superfamily. Cation-independent O-methyltransferase family. COMT subfamily. Homodimer. Expressed in leaves and flowers. Detected in stems and roots. In leaves, expressed in epidermal cells.

The protein resides in the cytoplasm. It catalyses the reaction 16-hydroxytabersonine + S-adenosyl-L-methionine = 16-methoxytabersonine + S-adenosyl-L-homocysteine + H(+). Its pathway is alkaloid biosynthesis; vindoline biosynthesis. Its function is as follows. 16-O-methyltransferase involved in the biosynthesis of vindoline. Highly specific for 16-hydroxytabersonine. No activity with tabersonine, 3-hydroxytyramine, 4-hydroxytyramine, 5-hydroxytryptamine (5HT), 2,3-dihydro-3-hydroxytabersonine, lochnericine, hoerhammericine, 16-hydroxy-2,3-dihydro-3-hydroxytabersonine, 16-hydroxylochnericine, 16-hydroxyhoerhammericine, quercetin, kaempferol and caffeic acid as substrates. The protein is Tabersonine 16-O-methyltransferase of Catharanthus roseus (Madagascar periwinkle).